A 280-amino-acid polypeptide reads, in one-letter code: Acyl-[acyl-carrier-protein]--UDP-N-acetylglucosamine O-acyltransferase (280 aa).

This sequence belongs to the transferase hexapeptide repeat family. LpxA subfamily. In terms of assembly, homotrimer.

It localises to the cytoplasm. It carries out the reaction a (3R)-hydroxyacyl-[ACP] + UDP-N-acetyl-alpha-D-glucosamine = a UDP-3-O-[(3R)-3-hydroxyacyl]-N-acetyl-alpha-D-glucosamine + holo-[ACP]. Its pathway is glycolipid biosynthesis; lipid IV(A) biosynthesis; lipid IV(A) from (3R)-3-hydroxytetradecanoyl-[acyl-carrier-protein] and UDP-N-acetyl-alpha-D-glucosamine: step 1/6. Involved in the biosynthesis of lipid A, a phosphorylated glycolipid that anchors the lipopolysaccharide to the outer membrane of the cell. The protein is Acyl-[acyl-carrier-protein]--UDP-N-acetylglucosamine O-acyltransferase of Chlamydia trachomatis serovar A (strain ATCC VR-571B / DSM 19440 / HAR-13).